A 422-amino-acid chain; its full sequence is Enolase (422 aa).

Gln-162 contributes to the (2R)-2-phosphoglycerate binding site. Catalysis depends on Glu-204, which acts as the Proton donor. Positions 241, 284, and 311 each coordinate Mg(2+). The (2R)-2-phosphoglycerate site is built by Lys-336, Arg-365, Ser-366, and Lys-387. The Proton acceptor role is filled by Lys-336.

The protein belongs to the enolase family. Mg(2+) serves as cofactor.

It is found in the cytoplasm. It localises to the secreted. The protein localises to the cell surface. It carries out the reaction (2R)-2-phosphoglycerate = phosphoenolpyruvate + H2O. The protein operates within carbohydrate degradation; glycolysis; pyruvate from D-glyceraldehyde 3-phosphate: step 4/5. Functionally, catalyzes the reversible conversion of 2-phosphoglycerate (2-PG) into phosphoenolpyruvate (PEP). It is essential for the degradation of carbohydrates via glycolysis. The chain is Enolase from Bartonella quintana (strain Toulouse) (Rochalimaea quintana).